Reading from the N-terminus, the 1155-residue chain is PAN2-PAN3 deadenylation complex catalytic subunit pan2 (1155 aa).

WD repeat units follow at residues 102-145 (THED…DKLP) and 276-315 (ANVSFMLGIDLSPSGEALAINDAECAIHLWGSPSKVHFNE). Residues 316–452 (MSKEVEFADV…GTKLNGEAED (137 aa)) form a linker region. Residues 453 to 822 (DPLLKYSNVE…VPCVLAYQVK (370 aa)) enclose the USP domain. One can recognise an Exonuclease domain in the interval 871–1049 (VALDTEFVDL…IEDARMALRL (179 aa)). 4 residues coordinate a divalent metal cation: D874, E876, D983, and D1042. The disordered stretch occupies residues 1095–1155 (TAVTMQNNSG…GDFFGGSPLK (61 aa)). The span at 1097 to 1106 (VTMQNNSGRN) shows a compositional bias: polar residues. Over residues 1107-1124 (TPSTPEVTAPTASAPTTP) the composition is skewed to low complexity.

Belongs to the peptidase C19 family. PAN2 subfamily. As to quaternary structure, forms a heterotrimer with an asymmetric homodimer of the regulatory subunit pan3 to form the poly(A)-nuclease (PAN) deadenylation complex. It depends on a divalent metal cation as a cofactor.

The protein localises to the cytoplasm. The catalysed reaction is Exonucleolytic cleavage of poly(A) to 5'-AMP.. Its activity is regulated as follows. Positively regulated by the regulatory subunit pan3. Functionally, catalytic subunit of the poly(A)-nuclease (PAN) deadenylation complex, one of two cytoplasmic mRNA deadenylases involved in mRNA turnover. PAN specifically shortens poly(A) tails of RNA and the activity is stimulated by poly(A)-binding protein pab1. PAN deadenylation is followed by rapid degradation of the shortened mRNA tails by the CCR4-NOT complex. Deadenylated mRNAs are then degraded by two alternative mechanisms, namely exosome-mediated 3'-5' exonucleolytic degradation, or deadenylation-dependent mRNA decaping and subsequent 5'-3' exonucleolytic degradation by xrn1. May also be involved in post-transcriptional maturation of mRNA poly(A) tails. In Aspergillus oryzae (strain ATCC 42149 / RIB 40) (Yellow koji mold), this protein is PAN2-PAN3 deadenylation complex catalytic subunit pan2.